Reading from the N-terminus, the 306-residue chain is Enoyl-CoA isomerase/hydratase MYCGRDRAFT_76805 (306 aa).

Substrate is bound by residues 103-107 (AGADL) and Gly-150.

The protein belongs to the enoyl-CoA hydratase/isomerase family.

The catalysed reaction is a (3S)-3-hydroxyacyl-CoA = a (2E)-enoyl-CoA + H2O. It catalyses the reaction a 4-saturated-(3S)-3-hydroxyacyl-CoA = a (3E)-enoyl-CoA + H2O. Its pathway is siderophore biosynthesis. Functionally, enoyl-CoA isomerase/hydratase involved in the biosynthesis of a ferrichrome A-like siderophore which may contribute to organismal virulence. The first step of siderophore biosynthesis is performed by the HMG-CoA synthase (HMGS) MYCGRDRAFT_54740 which catalyzes the generation of HMG-CoA and CoA using acetoacetyl-CoA and acetyl-CoA as substrates. The enoyl-CoA isomerase/hydratase MYCGRDRAFT_76805 then catalyzes the conversion of HMG-CoA to methylglutaconyl-CoA. The acyltransferase MYCGRDRAFT_85486 then fuses methylglutaconyl-CoA with hydroxyornithine to yield methylglutaconyl hydroxyornithine. Methylglutaconyl hydroxyornithine is then available for use by the nonribosomal peptide synthetase NRPS2 to generate the ferrichrome A-like siderophore. This is Enoyl-CoA isomerase/hydratase MYCGRDRAFT_76805 from Zymoseptoria tritici (strain CBS 115943 / IPO323) (Speckled leaf blotch fungus).